Reading from the N-terminus, the 469-residue chain is UDP-N-acetylmuramate--L-alanine ligase (469 aa).

Residue 122-128 (GTHGKTT) participates in ATP binding.

It belongs to the MurCDEF family.

It localises to the cytoplasm. It catalyses the reaction UDP-N-acetyl-alpha-D-muramate + L-alanine + ATP = UDP-N-acetyl-alpha-D-muramoyl-L-alanine + ADP + phosphate + H(+). Its pathway is cell wall biogenesis; peptidoglycan biosynthesis. Cell wall formation. In Legionella pneumophila subsp. pneumophila (strain Philadelphia 1 / ATCC 33152 / DSM 7513), this protein is UDP-N-acetylmuramate--L-alanine ligase.